The sequence spans 678 residues: DNA ligase (678 aa).

NAD(+) contacts are provided by residues 36 to 40 (DAEYD), 85 to 86 (SL), and Glu117. Lys119 serves as the catalytic N6-AMP-lysine intermediate. 4 residues coordinate NAD(+): Arg140, Glu177, Lys294, and Lys318. Residues Cys412, Cys415, Cys430, and Cys436 each coordinate Zn(2+). The region spanning 595–678 (ADEQPLNGQT…NLLREHGIEV (84 aa)) is the BRCT domain.

It belongs to the NAD-dependent DNA ligase family. LigA subfamily. The cofactor is Mg(2+). Mn(2+) serves as cofactor.

It carries out the reaction NAD(+) + (deoxyribonucleotide)n-3'-hydroxyl + 5'-phospho-(deoxyribonucleotide)m = (deoxyribonucleotide)n+m + AMP + beta-nicotinamide D-nucleotide.. Functionally, DNA ligase that catalyzes the formation of phosphodiester linkages between 5'-phosphoryl and 3'-hydroxyl groups in double-stranded DNA using NAD as a coenzyme and as the energy source for the reaction. It is essential for DNA replication and repair of damaged DNA. In Marinobacter nauticus (strain ATCC 700491 / DSM 11845 / VT8) (Marinobacter aquaeolei), this protein is DNA ligase.